Reading from the N-terminus, the 627-residue chain is Mitochondrial Rho GTPase 1 (627 aa).

Residues Met1–His169 form the Miro 1 domain. The Cytoplasmic segment spans residues Met1 to Arg599. GTP-binding positions include Gly10 to Ser17, Asp58 to Arg62, and Asn114 to Asp117. EF-hand domains lie at Leu185 to Lys220 and Ala305 to Leu340. Ca(2+) is bound by residues Asp198, Asp200, Asp202, Tyr204, Glu209, Asp318, Asp320, Asp322, and Glu329. The region spanning Arg420–Thr584 is the Miro 2 domain. GTP is bound by residues Gly429–Ser436, Glu465–Gly469, and Leu534–Asp537. The helical; Anchor for type IV membrane protein transmembrane segment at Thr600–Trp620 threads the bilayer. Over Arg621 to Leu627 the chain is Mitochondrial intermembrane.

Belongs to the mitochondrial Rho GTPase family.

It is found in the mitochondrion outer membrane. Mitochondrial GTPase involved in mitochondrial trafficking. Probably involved in control of anterograde transport of mitochondria and their subcellular distribution. This is Mitochondrial Rho GTPase 1 (GEM1) from Gibberella zeae (strain ATCC MYA-4620 / CBS 123657 / FGSC 9075 / NRRL 31084 / PH-1) (Wheat head blight fungus).